Reading from the N-terminus, the 182-residue chain is Adenylate kinase (182 aa).

12-17 is an ATP binding site; sequence GAGKGT. Residues 32-61 are NMP; it reads STGDLLREEVSGGTDLGKKAELIMNKGELV. AMP is bound by residues T33, R38, 59–61, 85–88, and Q92; these read ELV and GFPR. Residues 126–132 are LID; that stretch reads GRGRKDD. R127 contributes to the ATP binding site. Positions 129 and 140 each coordinate AMP. Residue G168 participates in ATP binding.

The protein belongs to the adenylate kinase family. As to quaternary structure, monomer.

The protein resides in the cytoplasm. It catalyses the reaction AMP + ATP = 2 ADP. Its pathway is purine metabolism; AMP biosynthesis via salvage pathway; AMP from ADP: step 1/1. In terms of biological role, catalyzes the reversible transfer of the terminal phosphate group between ATP and AMP. Plays an important role in cellular energy homeostasis and in adenine nucleotide metabolism. The polypeptide is Adenylate kinase (Prochlorococcus marinus (strain SARG / CCMP1375 / SS120)).